The chain runs to 371 residues: Alanine racemase (371 aa).

The active-site Proton acceptor; specific for D-alanine is Lys39. Lys39 is modified (N6-(pyridoxal phosphate)lysine). Arg137 serves as a coordination point for substrate. Tyr266 functions as the Proton acceptor; specific for L-alanine in the catalytic mechanism. Met314 is a binding site for substrate.

It belongs to the alanine racemase family. Pyridoxal 5'-phosphate is required as a cofactor.

It catalyses the reaction L-alanine = D-alanine. Its pathway is amino-acid biosynthesis; D-alanine biosynthesis; D-alanine from L-alanine: step 1/1. In terms of biological role, catalyzes the interconversion of L-alanine and D-alanine. May also act on other amino acids. This chain is Alanine racemase (alr), found in Desulfovibrio desulfuricans (strain ATCC 27774 / DSM 6949 / MB).